A 113-amino-acid chain; its full sequence is Large ribosomal subunit protein uL24 (113 aa).

A disordered region spans residues 48–70 (HRKRVTNDKGTSSGGLEKRESPM).

The protein belongs to the universal ribosomal protein uL24 family. Part of the 50S ribosomal subunit.

One of two assembly initiator proteins, it binds directly to the 5'-end of the 23S rRNA, where it nucleates assembly of the 50S subunit. Its function is as follows. One of the proteins that surrounds the polypeptide exit tunnel on the outside of the subunit. In Tropheryma whipplei (strain TW08/27) (Whipple's bacillus), this protein is Large ribosomal subunit protein uL24.